The chain runs to 482 residues: Cytochrome P450 monooxygenase pynD (482 aa).

The first 22 residues, 1-22 (MWRIPVIVALVAGLLYWVRKQG), serve as a signal peptide directing secretion. N-linked (GlcNAc...) asparagine glycosylation is present at N401. C417 contacts heme.

This sequence belongs to the cytochrome P450 family. Heme is required as a cofactor.

The protein operates within secondary metabolite biosynthesis. Cytochrome P450 monooxygenase; part of the gene cluster that mediates the biosynthesis of pyranonigrins, a family of antioxidative compounds. The first step of pyranonigrins biosynthesis is performed by the hybrid PKS-NRPS synthetase that condenses 6 malonyl-CoA units to an acetyl starter unit, to form a 1,3,5-trioxotetradecane-6,8-dienyl-ACP. The enoyl reductase (ER) domain of pynA is likely to be functional during the first two rounds of polyketide chain extension, to generate the saturated C-C bonds of the alkyl side chain. PynA subsequently forms the amide bond between the acyl chain and L-serine. Although pynA has a terminal reductase domain, it appears to require the thioesterase pynI for the release of the straight-chain intermediate from pynA via the formation of a tetramic acid pyranonigrin J. The methyltransferase pynC then coverts pyranonigrin J to pyranonigrin I via N-methylation. The FAD-dependent monooxygenase pynG catalyzes an epoxidation-mediated cyclization to form the dihydro-gamma-pyrone moiety, followed by pynD-catalyzed oxidation of the alcohol to the ketone and enolization to yield the characteristic tetramic acid-fused gamma-pyrone core of pyranonigrin H. Pyranonigrin H is substrate of pynH for dehydration-mediated exo-methylene formation from the serine side chain to produce pyranonigrin E, before the oxidase pynE reduces the exo-methylene of pyranonigrin E into a pendant methyl to form pyranonigrin G. The FAD-linked oxidoreductase pynB performs the reverse reaction and converts pyranonigrin G back to pyranonigrin E. This is Cytochrome P450 monooxygenase pynD from Aspergillus niger (strain ATCC MYA-4892 / CBS 513.88 / FGSC A1513).